The primary structure comprises 244 residues: tRNA pseudouridine synthase A (244 aa).

Aspartate 52 functions as the Nucleophile in the catalytic mechanism. Residue tyrosine 110 participates in substrate binding.

This sequence belongs to the tRNA pseudouridine synthase TruA family. In terms of assembly, homodimer.

It carries out the reaction uridine(38/39/40) in tRNA = pseudouridine(38/39/40) in tRNA. Formation of pseudouridine at positions 38, 39 and 40 in the anticodon stem and loop of transfer RNAs. This chain is tRNA pseudouridine synthase A, found in Clostridium botulinum (strain Alaska E43 / Type E3).